The sequence spans 289 residues: D-alanine aminotransferase (289 aa).

Tyr-31 provides a ligand contact to substrate. Arg-50 contacts pyridoxal 5'-phosphate. Positions 99 and 101 each coordinate substrate. Lys-147 bears the N6-(pyridoxal phosphate)lysine mark. Glu-179 is a pyridoxal 5'-phosphate binding site.

This sequence belongs to the class-IV pyridoxal-phosphate-dependent aminotransferase family. As to quaternary structure, homodimer. The cofactor is pyridoxal 5'-phosphate.

The catalysed reaction is D-alanine + 2-oxoglutarate = D-glutamate + pyruvate. Acts on the D-isomers of alanine, leucine, aspartate, glutamate, aminobutyrate, norvaline and asparagine. The enzyme transfers an amino group from a substrate D-amino acid to the pyridoxal phosphate cofactor to form pyridoxamine and an alpha-keto acid in the first half-reaction. The second half-reaction is the reverse of the first, transferring the amino group from the pyridoxamine to a second alpha-keto acid to form the product D-amino acid via a ping-pong mechanism. This is an important process in the formation of D-alanine and D-glutamate, which are essential bacterial cell wall components. This is D-alanine aminotransferase (dat) from Listeria monocytogenes serovar 1/2a (strain ATCC BAA-679 / EGD-e).